We begin with the raw amino-acid sequence, 222 residues long: 7-cyano-7-deazaguanine synthase (222 aa).

ATP is bound at residue 14-24 (FSGGQDSTTCL). The Zn(2+) site is built by Cys-190, Cys-199, Cys-202, and Cys-205.

Belongs to the QueC family. As to quaternary structure, homodimer. Zn(2+) serves as cofactor.

It carries out the reaction 7-carboxy-7-deazaguanine + NH4(+) + ATP = 7-cyano-7-deazaguanine + ADP + phosphate + H2O + H(+). Its pathway is purine metabolism; 7-cyano-7-deazaguanine biosynthesis. Its function is as follows. Catalyzes the ATP-dependent conversion of 7-carboxy-7-deazaguanine (CDG) to 7-cyano-7-deazaguanine (preQ(0)). In Staphylococcus aureus (strain Mu3 / ATCC 700698), this protein is 7-cyano-7-deazaguanine synthase.